We begin with the raw amino-acid sequence, 1190 residues long: ATPase histone chaperone abo1 (1190 aa).

A compositionally biased stretch (basic and acidic residues) spans 1–11 (MKEEASEHGGS). Disordered regions lie at residues 1–185 (MKEE…RKTH) and 204–253 (YIDS…DLAD). 2 stretches are compositionally biased toward acidic residues: residues 52 to 62 (QEDEGDEDWEE) and 82 to 106 (SEGD…DSED). Residues 112–131 (VRSKPKYKPGTRRSTRLRNR) are compositionally biased toward basic residues. Over residues 141–152 (EEHRPILRERTS) the composition is skewed to basic and acidic residues. 309–314 (PGTGKT) lines the ATP pocket. Residues 794-922 (RLLNKLKIKL…ANVLLGVEDM (129 aa)) enclose the Bromo domain.

Belongs to the AAA ATPase family. As to quaternary structure, homohexamer. Interacts with the FACT complex subunits spt16 and pob3. Interacts with histone H3-H4 (via N-terminus).

It localises to the nucleus. The protein resides in the chromosome. It carries out the reaction ATP + H2O = ADP + phosphate + H(+). Its function is as follows. ATPase histone chaperone which facilitates loading of histone H3-H4 onto DNA in an ATP-dependent manner. Plays a genome-wide role in nucleosome organization and establishment of chromatin. Also plays a role in heterochromatin assembly by stabilizing recruitment of the histone methyltransferase clr4 to methylated histone H3, to promote the transition from H3K9me2 to H3K9me3. The chain is ATPase histone chaperone abo1 from Schizosaccharomyces pombe (strain 972 / ATCC 24843) (Fission yeast).